Reading from the N-terminus, the 201-residue chain is Potassium-transporting ATPase KdpC subunit (201 aa).

Residues 13–33 form a helical membrane-spanning segment; the sequence is IIFIIFTILCGGIYTIFITGI.

It belongs to the KdpC family. The system is composed of three essential subunits: KdpA, KdpB and KdpC.

It is found in the cell membrane. Part of the high-affinity ATP-driven potassium transport (or Kdp) system, which catalyzes the hydrolysis of ATP coupled with the electrogenic transport of potassium into the cytoplasm. This subunit acts as a catalytic chaperone that increases the ATP-binding affinity of the ATP-hydrolyzing subunit KdpB by the formation of a transient KdpB/KdpC/ATP ternary complex. This chain is Potassium-transporting ATPase KdpC subunit, found in Clostridium botulinum (strain Alaska E43 / Type E3).